Consider the following 100-residue polypeptide: Urease subunit gamma (100 aa).

The protein belongs to the urease gamma subunit family. Heterotrimer of UreA (gamma), UreB (beta) and UreC (alpha) subunits. Three heterotrimers associate to form the active enzyme.

The protein localises to the cytoplasm. It catalyses the reaction urea + 2 H2O + H(+) = hydrogencarbonate + 2 NH4(+). The protein operates within nitrogen metabolism; urea degradation; CO(2) and NH(3) from urea (urease route): step 1/1. This Ralstonia nicotianae (strain ATCC BAA-1114 / GMI1000) (Ralstonia solanacearum) protein is Urease subunit gamma.